The primary structure comprises 916 residues: Protein translocase subunit SecA (916 aa).

ATP contacts are provided by residues glutamine 87, 105-109 (GEGKT), and aspartate 512. The interval 857 to 916 (QHAEAPSMEQAVAGEDEELPEGPAPVVPLEPVRNEQKIGRNEPCPCGSGKKYKHCHGQLD) is disordered. Residues cysteine 900, cysteine 902, cysteine 911, and histidine 912 each contribute to the Zn(2+) site. Residues 906–916 (KKYKHCHGQLD) show a composition bias toward basic residues.

This sequence belongs to the SecA family. Monomer and homodimer. Part of the essential Sec protein translocation apparatus which comprises SecA, SecYEG and auxiliary proteins SecDF-YajC and YidC. Requires Zn(2+) as cofactor.

The protein resides in the cell inner membrane. The protein localises to the cytoplasm. It carries out the reaction ATP + H2O + cellular proteinSide 1 = ADP + phosphate + cellular proteinSide 2.. Its function is as follows. Part of the Sec protein translocase complex. Interacts with the SecYEG preprotein conducting channel. Has a central role in coupling the hydrolysis of ATP to the transfer of proteins into and across the cell membrane, serving both as a receptor for the preprotein-SecB complex and as an ATP-driven molecular motor driving the stepwise translocation of polypeptide chains across the membrane. The polypeptide is Protein translocase subunit SecA (Pseudomonas paraeruginosa (strain DSM 24068 / PA7) (Pseudomonas aeruginosa (strain PA7))).